We begin with the raw amino-acid sequence, 222 residues long: Exosome complex component Rrp4 (222 aa).

The S1 motif domain occupies 63–131; that stretch reads NDSVIGKVVD…EVKKVKLGLH (69 aa). Positions 139 to 200 constitute a KH domain; sequence EGGTLAYITP…EIVKRALEMI (62 aa).

It belongs to the RRP4 family. In terms of assembly, component of the archaeal exosome complex. Forms a trimer of Rrp4 and/or Csl4 subunits. The trimer associates with a hexameric ring-like arrangement composed of 3 Rrp41-Rrp42 heterodimers.

The protein resides in the cytoplasm. Its function is as follows. Non-catalytic component of the exosome, which is a complex involved in RNA degradation. Increases the RNA binding and the efficiency of RNA degradation. Confers strong poly(A) specificity to the exosome. In Methanothermus fervidus (strain ATCC 43054 / DSM 2088 / JCM 10308 / V24 S), this protein is Exosome complex component Rrp4.